A 162-amino-acid polypeptide reads, in one-letter code: MALRQIRLENDPILRKKSREVEKIDDRIKQIVEDMFETMYENKGIGLACVQVGMLKRIVVIDMQDEDGKMVLINPKIIEKSEEKQINIEGCLSVPGKNGYVERPKTVVVEYTDLNGNTQRVMGTDYKAHCFCHELDHLDGVLYTDKVLNLSEEEVERLNNEK.

Positions 91 and 133 each coordinate Fe cation. Glu134 is an active-site residue. Residue His137 coordinates Fe cation.

The protein belongs to the polypeptide deformylase family. The cofactor is Fe(2+).

The enzyme catalyses N-terminal N-formyl-L-methionyl-[peptide] + H2O = N-terminal L-methionyl-[peptide] + formate. Removes the formyl group from the N-terminal Met of newly synthesized proteins. Requires at least a dipeptide for an efficient rate of reaction. N-terminal L-methionine is a prerequisite for activity but the enzyme has broad specificity at other positions. The polypeptide is Peptide deformylase (Finegoldia magna (strain ATCC 29328 / DSM 20472 / WAL 2508) (Peptostreptococcus magnus)).